A 150-amino-acid chain; its full sequence is NADH-quinone oxidoreductase subunit A (150 aa).

The next 3 membrane-spanning stretches (helical) occupy residues 14–34, 70–90, and 98–118; these read WAFAVFLIGALGLCSLMLLGA, LVAMFFVIFDVEALFLYAWAV, and LGFIEAAVFIAILLAGLFYLV.

Belongs to the complex I subunit 3 family. NDH-1 is composed of 13 different subunits. Subunits NuoA, H, J, K, L, M, N constitute the membrane sector of the complex.

The protein localises to the cell inner membrane. The enzyme catalyses a quinone + NADH + 5 H(+)(in) = a quinol + NAD(+) + 4 H(+)(out). Functionally, NDH-1 shuttles electrons from NADH, via FMN and iron-sulfur (Fe-S) centers, to quinones in the respiratory chain. The immediate electron acceptor for the enzyme in this species is believed to be ubiquinone. Couples the redox reaction to proton translocation (for every two electrons transferred, four hydrogen ions are translocated across the cytoplasmic membrane), and thus conserves the redox energy in a proton gradient. This is NADH-quinone oxidoreductase subunit A from Proteus mirabilis (strain HI4320).